Here is a 319-residue protein sequence, read N- to C-terminus: Beta-ketoacyl-[acyl-carrier-protein] synthase III (319 aa).

Active-site residues include Cys-115 and His-246. An ACP-binding region spans residues 247–251 (QANLR). The active site involves Asn-276.

The protein belongs to the thiolase-like superfamily. FabH family. Homodimer.

It localises to the cytoplasm. It catalyses the reaction malonyl-[ACP] + acetyl-CoA + H(+) = 3-oxobutanoyl-[ACP] + CO2 + CoA. It functions in the pathway lipid metabolism; fatty acid biosynthesis. Functionally, catalyzes the condensation reaction of fatty acid synthesis by the addition to an acyl acceptor of two carbons from malonyl-ACP. Catalyzes the first condensation reaction which initiates fatty acid synthesis and may therefore play a role in governing the total rate of fatty acid production. Possesses both acetoacetyl-ACP synthase and acetyl transacylase activities. Its substrate specificity determines the biosynthesis of branched-chain and/or straight-chain of fatty acids. This Coxiella burnetii (strain RSA 493 / Nine Mile phase I) protein is Beta-ketoacyl-[acyl-carrier-protein] synthase III.